Reading from the N-terminus, the 231-residue chain is Probable septum site-determining protein MinC (231 aa).

The tract at residues 102–125 (KEKAPRPAPAPQAPAQNTTPVTKT) is disordered.

The protein belongs to the MinC family. As to quaternary structure, interacts with MinD and FtsZ.

Cell division inhibitor that blocks the formation of polar Z ring septums. Rapidly oscillates between the poles of the cell to destabilize FtsZ filaments that have formed before they mature into polar Z rings. Prevents FtsZ polymerization. This is Probable septum site-determining protein MinC from Escherichia coli O139:H28 (strain E24377A / ETEC).